Reading from the N-terminus, the 214-residue chain is Immunoglobulin lambda-like polypeptide 5 (214 aa).

Positions 1 to 35 (MRPKTGQVGCETPEELGPGPRQRWPLLLLGLAMVA) are cleaved as a signal peptide. The j region stretch occupies residues 98 to 109 (VFGTGTKVTVLG). The tract at residues 110–214 (QPKANPTVTL…EKTVAPTECS (105 aa)) is c region. Residues 115–209 (PTVTLFPPSS…EGSTVEKTVA (95 aa)) enclose the Ig-like C1-type domain. A disulfide bond links cysteine 136 and cysteine 195.

As to expression, contrary to IGLL1, not expressed in pre-B-cells.

The protein resides in the secreted. This is Immunoglobulin lambda-like polypeptide 5 (IGLL5) from Homo sapiens (Human).